The chain runs to 461 residues: Flavin-containing monooxygenase FMO GS-OX-like 8 (461 aa).

20-25 contributes to the FAD binding site; sequence GAGPSG. Residue 220–225 coordinates NADP(+); the sequence is GCSMSG.

It belongs to the FMO family. Interacts with EER5. It depends on FAD as a cofactor.

Functionally, catalyzes the conversion of methylthioalkyl glucosinolates of any chain length into methylsulfinylalkyl glucosinolates. In Arabidopsis thaliana (Mouse-ear cress), this protein is Flavin-containing monooxygenase FMO GS-OX-like 8.